Here is a 62-residue protein sequence, read N- to C-terminus: Sucrase-isomaltase, intestinal (62 aa).

Residues 2–12 lie on the Cytoplasmic side of the membrane; that stretch reads ARKKFSGLEIX. Serine 7 is subject to Phosphoserine; by PKA. A helical; Signal-anchor for type II membrane protein transmembrane segment spans residues 13–32; it reads LIVLFAIVLSIAIALVVVXA. At 33 to 38 the chain is on the lumenal side; that stretch reads SKXPAV. The residue at position 59 (tyrosine 59) is a Sulfotyrosine.

It belongs to the glycosyl hydrolase 31 family. As to quaternary structure, the resulting sucrase and isomaltase subunits stay associated with one another in a complex by non-covalent linkages. The precursor is proteolytically cleaved when exposed to pancreatic proteases in the intestinal lumen. Post-translationally, sulfated.

Its subcellular location is the apical cell membrane. The catalysed reaction is Hydrolysis of sucrose and maltose by an alpha-D-glucosidase-type action.. It carries out the reaction Hydrolysis of (1-&gt;6)-alpha-D-glucosidic linkages in some oligosaccharides produced from starch and glycogen by alpha-amylase, and in isomaltose.. Functionally, plays an important role in the final stage of carbohydrate digestion. Isomaltase activity is specific for both alpha-1,4- and alpha-1,6-oligosaccharides. This is Sucrase-isomaltase, intestinal (SI) from Sus scrofa (Pig).